The chain runs to 320 residues: Methyltransferase gedG (320 aa).

The methyltransferase domain stretch occupies residues 61–154 (DAGAGNGVYS…QLRPGGTFAC (94 aa)). Positions 231–252 (GLLPPERRGEVTEPDHEGPHDQ) are disordered. Positions 235–252 (PERRGEVTEPDHEGPHDQ) are enriched in basic and acidic residues.

Belongs to the methyltransferase superfamily.

It participates in secondary metabolite biosynthesis. Methyltransferase; part of the gene cluster that mediates the biosynthesis of geodin, an intermediate in the biosynthesis of other natural products. The pathway begins with the synthesis of atrochrysone thioester by the polyketide synthase (PKS) gedC. The atrochrysone carboxyl ACP thioesterase gedB then breaks the thioester bond and releases the atrochrysone carboxylic acid from gedC. The atrochrysone carboxylic acid is then converted to atrochrysone which is further transformed into emodinanthrone. The next step is performed by the emodinanthrone oxygenase gedH that catalyzes the oxidation of emodinanthrone to emodin. Emodin O-methyltransferase encoded probably by gedA then catalyzes methylation of the 8-hydroxy group of emodin to form questin. Ring cleavage of questin by questin oxidase gedK leads to desmethylsulochrin via several intermediates including questin epoxide. Another methylation step probably catalyzed by methyltransferase gedG leads to the formation of sulochrin which is further converted to dihydrogeodin by the sulochrin halogenase gedL. Finally, the dihydrogeodin oxidase gedJ catalyzes the stereospecific phenol oxidative coupling reaction converting dihydrogeodin to geodin. This Aspergillus terreus (strain NIH 2624 / FGSC A1156) protein is Methyltransferase gedG.